We begin with the raw amino-acid sequence, 187 residues long: Elongation factor P (187 aa).

Belongs to the elongation factor P family.

It is found in the cytoplasm. It participates in protein biosynthesis; polypeptide chain elongation. Functionally, involved in peptide bond synthesis. Stimulates efficient translation and peptide-bond synthesis on native or reconstituted 70S ribosomes in vitro. Probably functions indirectly by altering the affinity of the ribosome for aminoacyl-tRNA, thus increasing their reactivity as acceptors for peptidyl transferase. The chain is Elongation factor P from Mycobacterium ulcerans (strain Agy99).